Reading from the N-terminus, the 280-residue chain is Protein lyl-1 (280 aa).

The segment at 1–60 (MCPPQAQAEVGPTMTEKAEMVCAPSPAPAPPPKPASPGPPQVEEVGHRGGSSPPRLPPGV) is disordered. Residues 25–40 (SPAPAPPPKPASPGPP) are compositionally biased toward pro residues. Positions 150–202 (ARRVFTNSRERWRQQNVNGAFAELRKLLPTHPPDRKLSKNEVLRLAMKYIGFL) constitute a bHLH domain. The disordered stretch occupies residues 214 to 280 (AAGPTPPGPR…EQTALSPEVR (67 aa)). The segment covering 229 to 245 (RVPDDGARRGSGRRAEA) has biased composition (basic and acidic residues). Residues 257–267 (PDGSPGGAARP) show a composition bias toward low complexity. 2 positions are modified to phosphoserine: Ser-260 and Ser-276.

As to quaternary structure, efficient DNA binding requires dimerization with another bHLH protein.

It localises to the nucleus. This Homo sapiens (Human) protein is Protein lyl-1 (LYL1).